The chain runs to 327 residues: Tetraacyldisaccharide 4'-kinase (327 aa).

ATP is bound at residue 52–59; it reads TLGGAGKT.

It belongs to the LpxK family.

The catalysed reaction is a lipid A disaccharide + ATP = a lipid IVA + ADP + H(+). The protein operates within glycolipid biosynthesis; lipid IV(A) biosynthesis; lipid IV(A) from (3R)-3-hydroxytetradecanoyl-[acyl-carrier-protein] and UDP-N-acetyl-alpha-D-glucosamine: step 6/6. In terms of biological role, transfers the gamma-phosphate of ATP to the 4'-position of a tetraacyldisaccharide 1-phosphate intermediate (termed DS-1-P) to form tetraacyldisaccharide 1,4'-bis-phosphate (lipid IVA). The chain is Tetraacyldisaccharide 4'-kinase from Methylorubrum extorquens (strain CM4 / NCIMB 13688) (Methylobacterium extorquens).